Reading from the N-terminus, the 627-residue chain is Glyco-Gag protein (627 aa).

The Cytoplasmic segment spans residues 1–63 (LGDVPRTSGA…FLLSVWNRSR (63 aa)). The chain crosses the membrane as a helical span at residues 64 to 86 (AARLVCCSIVLCCLCLTVFLYLS). Residues 87-627 (ENMGQTVTTP…PQASLLTLDD (541 aa)) lie on the Extracellular side of the membrane. N-linked (GlcNAc...) asparagine; by host glycosylation is present at asparagine 113. Residues 199-215 (PPSAPSLPPEPPFPTPP) are compositionally biased toward pro residues. Disordered regions lie at residues 199 to 310 (PPSA…RQGG) and 523 to 627 (RETP…TLDD). Basic and acidic residues-rich tracts occupy residues 523–555 (RETPEEREERIRRETEEKEERRRAEDEQREKER) and 575–608 (RQDRQGGERRRPQLDHDQCAYCKEKGHWARDCPK). Residues 593 to 608 (CAYCKEKGHWARDCPK) form a CCHC-type zinc finger.

In terms of processing, glycosylated by host. Post-translationally, cleaved by host near the middle of the molecule, releasing the c-terminal half containing capsid and nucleoprotein domains op GAG.

It is found in the host cell membrane. Its function is as follows. Plays a role in viral particle release. Presumably acts by facilitating the fission of the virion bud at the cell surface. May prevent the antiviral activity of murine APOBEC3. This is Glyco-Gag protein from Friend murine leukemia virus (isolate 57) (FrMLV).